The following is a 361-amino-acid chain: MVPQSDDFERIVLKNIPLIDVRAPVEFAQGAFEMAHNLPLMNDEERQTVGICYKQKGHDEAVKLGHRLVNDKVRLPRVSGWQSFMEKYPEAMLYCFRGGMRSKIAQQWLADNGCEIVRLKGGYKAFRRYLIDHLEIMPQRFSTEGIQTWALGGRTGCGKTRLLHTLDNAIDLEGLANHRGSAFGGHVAPQPTQINFENTLAMAVMRFYAQGHSSLVLEDESHCIGSVSVPKTFFDFFKGGRQVLLEAPLEERVSITREEYVEQAQAEYETTEDWTVFMRSAFGRIRKRLGGERYQRVLKKFDQACENQHRTQEFDAHDDWIRILLTEYYDPMYDYQMQKKQCKIDFSGNFDAVKDFLSQQS.

The Rhodanese domain maps to 12-135 (VLKNIPLIDV…FRRYLIDHLE (124 aa)). Cysteine 95 functions as the S-selanylcysteine intermediate in the catalytic mechanism.

The protein belongs to the SelU family. Monomer.

The enzyme catalyses 5-methylaminomethyl-2-thiouridine(34) in tRNA + selenophosphate + (2E)-geranyl diphosphate + H2O + H(+) = 5-methylaminomethyl-2-selenouridine(34) in tRNA + (2E)-thiogeraniol + phosphate + diphosphate. The catalysed reaction is 5-methylaminomethyl-2-thiouridine(34) in tRNA + (2E)-geranyl diphosphate = 5-methylaminomethyl-S-(2E)-geranyl-thiouridine(34) in tRNA + diphosphate. It catalyses the reaction 5-methylaminomethyl-S-(2E)-geranyl-thiouridine(34) in tRNA + selenophosphate + H(+) = 5-methylaminomethyl-2-(Se-phospho)selenouridine(34) in tRNA + (2E)-thiogeraniol. It carries out the reaction 5-methylaminomethyl-2-(Se-phospho)selenouridine(34) in tRNA + H2O = 5-methylaminomethyl-2-selenouridine(34) in tRNA + phosphate. Functionally, involved in the post-transcriptional modification of the uridine at the wobble position (U34) of tRNA(Lys), tRNA(Glu) and tRNA(Gln). Catalyzes the conversion of 2-thiouridine (S2U-RNA) to 2-selenouridine (Se2U-RNA). Acts in a two-step process involving geranylation of 2-thiouridine (S2U) to S-geranyl-2-thiouridine (geS2U) and subsequent selenation of the latter derivative to 2-selenouridine (Se2U) in the tRNA chain. This Hydrogenovibrio crunogenus (strain DSM 25203 / XCL-2) (Thiomicrospira crunogena) protein is tRNA 2-selenouridine synthase.